The primary structure comprises 279 residues: Ribosomal RNA small subunit methyltransferase A (279 aa).

The S-adenosyl-L-methionine site is built by histidine 15, leucine 17, glycine 42, glutamate 64, aspartate 89, and asparagine 109.

This sequence belongs to the class I-like SAM-binding methyltransferase superfamily. rRNA adenine N(6)-methyltransferase family. RsmA subfamily.

The protein resides in the cytoplasm. It carries out the reaction adenosine(1518)/adenosine(1519) in 16S rRNA + 4 S-adenosyl-L-methionine = N(6)-dimethyladenosine(1518)/N(6)-dimethyladenosine(1519) in 16S rRNA + 4 S-adenosyl-L-homocysteine + 4 H(+). Functionally, specifically dimethylates two adjacent adenosines (A1518 and A1519) in the loop of a conserved hairpin near the 3'-end of 16S rRNA in the 30S particle. May play a critical role in biogenesis of 30S subunits. This Prochlorococcus marinus (strain SARG / CCMP1375 / SS120) protein is Ribosomal RNA small subunit methyltransferase A.